We begin with the raw amino-acid sequence, 1306 residues long: MTMYLWLKLLAFGFAFLDTEVFVTGQSPTPSPTGLTTAKMPSVPLSSDPLPTHTTAFSPASTFERENDFSETTTSLSPDNTSTQVSPDSLDNASAFNTTGVSSVQTPHLPTHADSQTPSAGTDTQTFSGSAANAKLNPTPGSNAISDVPGERSTASTFPTDPVSPLTTTLSLAHHSSAALPARTSNTTITANTSDAYLNASETTTLSPSGSAVISTTTIATTPSKPTCDEKYANITVDYLYNKETKLFTAKLNVNENVECGNNTCTNNEVHNLTECKNASVSISHNSCTAPDKTLILDVPPGVEKFQLHDCTQVEKADTTICLKWKNIETFTCDTQNITYRFQCGNMIFDNKEIKLENLEPEHEYKCDSEILYNNHKFTNASKIIKTDFGSPGEPQIIFCRSEAAHQGVITWNPPQRSFHNFTLCYIKETEKDCLNLDKNLIKYDLQNLKPYTKYVLSLHAYIIAKVQRNGSAAMCHFTTKSAPPSQVWNMTVSMTSDNSMHVKCRPPRDRNGPHERYHLEVEAGNTLVRNESHKNCDFRVKDLQYSTDYTFKAYFHNGDYPGEPFILHHSTSYNSKALIAFLAFLIIVTSIALLVVLYKIYDLHKKRSCNLDEQQELVERDDEKQLMNVEPIHADILLETYKRKIADEGRLFLAEFQSIPRVFSKFPIKEARKPFNQNKNRYVDILPYDYNRVELSEINGDAGSNYINASYIDGFKEPRKYIAAQGPRDETVDDFWRMIWEQKATVIVMVTRCEEGNRNKCAEYWPSMEEGTRAFGDVVVKINQHKRCPDYIIQKLNIVNKKEKATGREVTHIQFTSWPDHGVPEDPHLLLKLRRRVNAFSNFFSGPIVVHCSAGVGRTGTYIGIDAMLEGLEAENKVDVYGYVVKLRRQRCLMVQVEAQYILIHQALVEYNQFGETEVNLSELHPYLHNMKKRDPPSEPSPLEAEFQRLPSYRSWRTQHIGNQEENKSKNRNSNVIPYDYNRVPLKHELEMSKESEHDSDESSDDDSDSEEPSKYINASFIMSYWKPEVMIAAQGPLKETIGDFWQMIFQRKVKVIVMLTELKHGDQEICAQYWGEGKQTYGDIEVDLKDTDKSSTYTLRVFELRHSKRKDSRTVYQYQYTNWSVEQLPAEPKELISMIQVVKQKLPQKNSSEGNKHHKSTPLLIHCRDGSQQTGIFCALLNLLESAETEEVVDIFQVVKALRKARPGMVSTFEQYQFLYDVIASTYPAQNGQVKKNNHQEDKIEFDNEVDKVKQDANCVNPLGAPEKLPEAKEQAEGSEPTSGTEGPEHSVNGPASPALNQGS.

The N-terminal stretch at Met1 to Gly25 is a signal peptide. At Gln26 to Lys577 the chain is on the extracellular side. Residues Pro28–Val163 form a disordered region. 2 stretches are compositionally biased toward polar residues: residues Thr52 to Ser61 and Ser70 to Ala131. 10 N-linked (GlcNAc...) asparagine glycosylation sites follow: Asn80, Asn92, Asn97, Asn186, Asn192, Asn199, Asn234, Asn262, Asn272, and Asn278. N-linked (GlcNAc...) asparagine; atypical glycosylation occurs at Asn286. Residues Asn337, Asn380, Asn421, Asn470, Asn490, and Asn531 are each glycosylated (N-linked (GlcNAc...) asparagine). Fibronectin type-III domains lie at Ser391 to Ala483 and Pro484 to Ser576. A helical membrane pass occupies residues Ala578–Leu598. Residues Tyr599–Ser1306 lie on the Cytoplasmic side of the membrane. Tyrosine-protein phosphatase domains are found at residues Phe653–Tyr912 and Leu944–Thr1228. Tyr683 is modified (phosphotyrosine). Substrate-binding positions include Asp821, Cys853–Arg859, and Gln897. The active-site Phosphocysteine intermediate is the Cys853. A phosphoserine mark is found at Ser975, Ser994, Ser997, Ser1001, Ser1004, Ser1005, and Ser1009. The tract at residues Met993 to Pro1014 is disordered. Residues His999 to Glu1012 are compositionally biased toward acidic residues. Cys1169 (phosphocysteine intermediate) is an active-site residue. Residues Cys1261–Ser1306 form a disordered region. Ser1299 carries the post-translational modification Phosphoserine.

This sequence belongs to the protein-tyrosine phosphatase family. Receptor class 1/6 subfamily. As to quaternary structure, binds GANAB and PRKCSH. Interacts with SKAP1. Interacts with DPP4; the interaction is enhanced in an interleukin-12-dependent manner in activated lymphocytes. Interacts with CD53; this interaction stabilizes PTPRC on the membrane and is required for optimal phosphatase activity. In terms of assembly, interacts with CLEC10A. Does not interact with CLEC10A. As to quaternary structure, (Microbial infection) Interacts with human cytomegalovirus protein UL11; the interaction is required for binding of UL11 to T-cells. In terms of processing, heavily N- and O-glycosylated. In terms of tissue distribution, isoform 1: Detected in thymocytes. Isoform 2: Detected in thymocytes. Isoform 3: Detected in thymocytes. Isoform 4: Not detected in thymocytes. Isoform 5: Detected in thymocytes. Isoform 6: Not detected in thymocytes. Isoform 7: Detected in thymocytes. Isoform 8: Not detected in thymocytes.

It is found in the cell membrane. The protein resides in the membrane raft. Its subcellular location is the synapse. The enzyme catalyses O-phospho-L-tyrosyl-[protein] + H2O = L-tyrosyl-[protein] + phosphate. Its function is as follows. Protein tyrosine-protein phosphatase required for T-cell activation through the antigen receptor. Acts as a positive regulator of T-cell coactivation upon binding to DPP4. The first PTPase domain has enzymatic activity, while the second one seems to affect the substrate specificity of the first one. Upon T-cell activation, recruits and dephosphorylates SKAP1 and FYN. Dephosphorylates LYN, and thereby modulates LYN activity. Interacts with CLEC10A at antigen presenting cell-T cell contact; CLEC10A on immature dendritic cells recognizes Tn antigen-carrying PTPRC/CD45 receptor on effector T cells and modulates T cell activation threshold to limit autoreactivity. Functionally, (Microbial infection) Acts as a receptor for human cytomegalovirus protein UL11 and mediates binding of UL11 to T-cells, leading to reduced induction of tyrosine phosphorylation of multiple signaling proteins upon T-cell receptor stimulation and impaired T-cell proliferation. The chain is Receptor-type tyrosine-protein phosphatase C from Homo sapiens (Human).